The chain runs to 215 residues: Cytochrome b6 (215 aa).

The chain crosses the membrane as a helical span at residues 32–52 (IFYCLGGITLTCFLVQVATGF). Residue C35 coordinates heme c. H86 and H100 together coordinate heme b. The next 3 helical transmembrane spans lie at 90 to 110 (ASMM…TGGF), 116 to 136 (LTWV…VTGY), and 186 to 206 (LHTF…FPMI). The heme b site is built by H187 and H202.

Belongs to the cytochrome b family. PetB subfamily. In terms of assembly, the 4 large subunits of the cytochrome b6-f complex are cytochrome b6, subunit IV (17 kDa polypeptide, PetD), cytochrome f and the Rieske protein, while the 4 small subunits are PetG, PetL, PetM and PetN. The complex functions as a dimer. It depends on heme b as a cofactor. Heme c is required as a cofactor.

It is found in the plastid. The protein localises to the chloroplast thylakoid membrane. Component of the cytochrome b6-f complex, which mediates electron transfer between photosystem II (PSII) and photosystem I (PSI), cyclic electron flow around PSI, and state transitions. The protein is Cytochrome b6 of Helianthus annuus (Common sunflower).